The chain runs to 222 residues: uncharacterized protein (222 aa).

This is an uncharacterized protein from Pyrococcus woesei.